We begin with the raw amino-acid sequence, 475 residues long: Gustatory and pheromone receptor 33a (475 aa).

Residues 1–34 (MIQIMNWFSMVIGLIPLNRQQSETNFILDYAMMC) are Cytoplasmic-facing. Residues 35–55 (IVPIFYVACYLLINLSHIIGL) traverse the membrane as a helical segment. Residues 56–68 (CLLDSCNSVCKLS) lie on the Extracellular side of the membrane. A helical transmembrane segment spans residues 69–89 (SHLFMHLGAFLYLTITLLSLY). The Cytoplasmic segment spans residues 90–128 (RRKEFFQQFDARLNDIDAVIQKCQRVAEMDKVKVTAVKH). A helical membrane pass occupies residues 129-149 (SVAYHFTWLFLFCVFTFALYY). Topologically, residues 150-158 (DVRSLYLTF) are extracellular. A helical transmembrane segment spans residues 159–179 (GNLAFIPFMVSSFPYLAGSII). Residues 180 to 319 (QGEFIYHVSV…LALSVITNGE (140 aa)) lie on the Cytoplasmic side of the membrane. A disordered region spans residues 243–281 (TGFGNENKFAGEMKRQEGQQKNDDDDLDTSNDEDEDDFD). Residues 251 to 264 (FAGEMKRQEGQQKN) show a composition bias toward basic and acidic residues. Residues 265–281 (DDDDLDTSNDEDEDDFD) are compositionally biased toward acidic residues. Residues 320–340 (FGPQCVPYMAACFVVSIFGIF) traverse the membrane as a helical segment. The Extracellular segment spans residues 341–357 (LETKVNFIVGGKSRLLD). The helical transmembrane segment at 358-378 (YMTYLYVIWSFTTMMVAYIVL) threads the bilayer. Topologically, residues 379–441 (RLCCNANNHS…FNGVGLFALD (63 aa)) are cytoplasmic. The helical transmembrane segment at 442–462 (YTFIFSTVSAATSYLIVLLQF) threads the bilayer. At 463-475 (DMTAILRNEGLMS) the chain is on the extracellular side.

It belongs to the insect chemoreceptor superfamily. Gustatory receptor (GR) family. Gr66a subfamily. In terms of tissue distribution, expressed widely in gustatory receptor neurons (GRNs) that respond to aversive chemicals. In larvae, is expressed in neurons of the terminal external chemosensory organ, and the dorsal, ventral and posterior external chemosensory organs.

The protein resides in the cell membrane. Gustatory receptor which mediates acceptance or avoidance behavior, depending on its substrates. Required for sensing all nonvolatile repulsive chemicals, including tastants, pheromones, and especially N,N-Diethyl-meta-toluamide (DEET), the most widely used insect repellent worldwide. Also functions as a pheromone receptor for a male inhibitory pheromone leading to male-male courtship suppression. This is Gustatory and pheromone receptor 33a (Gr33a) from Drosophila melanogaster (Fruit fly).